The sequence spans 198 residues: Na(+)-translocating NADH-quinone reductase subunit E (198 aa).

6 helical membrane passes run 11-31, 35-55, 77-97, 110-130, 140-160, and 176-196; these read SVFIENMALSFFLGMCTFLAV, VSTAFGLGVAVTVVLGISVPV, FLNFITFIGVIAALVQILEMI, GIFLPLITVNCAIFGGVSFMV, IVYGIGAGTGWMLAIVALAGI, and LGITFITVGLMALGFMSFSGV.

The protein belongs to the NqrDE/RnfAE family. In terms of assembly, composed of six subunits; NqrA, NqrB, NqrC, NqrD, NqrE and NqrF.

The protein localises to the cell inner membrane. It carries out the reaction a ubiquinone + n Na(+)(in) + NADH + H(+) = a ubiquinol + n Na(+)(out) + NAD(+). In terms of biological role, NQR complex catalyzes the reduction of ubiquinone-1 to ubiquinol by two successive reactions, coupled with the transport of Na(+) ions from the cytoplasm to the periplasm. NqrA to NqrE are probably involved in the second step, the conversion of ubisemiquinone to ubiquinol. The protein is Na(+)-translocating NADH-quinone reductase subunit E of Histophilus somni (strain 2336) (Haemophilus somnus).